Consider the following 888-residue polypeptide: Glutamate receptor 3 (888 aa).

Positions 1 to 22 (MGQSVLRAVFFLVLGLLGHSHG) are cleaved as a signal peptide. The Extracellular segment spans residues 23-546 (GFPNTISIGG…GVFSFLDPLA (524 aa)). N-linked (GlcNAc...) asparagine glycans are attached at residues asparagine 57, asparagine 260, asparagine 374, asparagine 409, and asparagine 416. Cysteine 85 and cysteine 334 form a disulfide bridge. 3 residues coordinate L-glutamate: proline 502, threonine 504, and arginine 509. The helical transmembrane segment at 547-567 (YEIWMCIVFAYIGVSVVLFLV) threads the bilayer. Residues 568 to 596 (SRFSPYEWHLEDNNEEPRDPQSPPDPPNE) lie on the Cytoplasmic side of the membrane. Residues 597 to 612 (FGIFNSLWFSLGAFMQ) constitute an intramembrane region (helical; Pore-forming). Residues 613-615 (QGC) lie within the membrane without spanning it. Cysteine 615 carries S-palmitoyl cysteine lipidation. Residues 616–621 (DISPRS) lie on the Cytoplasmic side of the membrane. A helical membrane pass occupies residues 622 to 642 (LSGRIVGGVWWFFTLIIISSY). At 643 to 817 (TANLAAFLTV…DKTSALSLSN (175 aa)) the chain is on the extracellular side. L-glutamate contacts are provided by serine 680, threonine 681, and glutamate 731. A disulfide bridge links cysteine 744 with cysteine 799. Residues 818-838 (VAGVFYILVGGLGLAMMVALI) traverse the membrane as a helical segment. Over 839 to 888 (EFCYKSRAESKRMKLTKNTQNFKPAPATNTQNYATYREGYNVYGTESVKI) the chain is Cytoplasmic. Cysteine 841 is lipidated: S-palmitoyl cysteine. Phosphotyrosine is present on residues tyrosine 871 and tyrosine 881.

It belongs to the glutamate-gated ion channel (TC 1.A.10.1) family. GRIA3 subfamily. Homotetramer or heterotetramer of pore-forming glutamate receptor subunits. Tetramers may be formed by the dimerization of dimers. Interacts with PICK1, GRIP1 and GRIP2. Found in a complex with GRIA1, GRIA2, GRIA4, CNIH2, CNIH3, CACNG2, CACNG3, CACNG4, CACNG5, CACNG7 and CACNG8. Interacts with CACNG5. Found in a complex with GRIA1, GRIA2, GRIA4, DLG4, CACNG8 and CNIH2.

The protein resides in the cell membrane. It is found in the postsynaptic cell membrane. Its subcellular location is the postsynaptic density membrane. The enzyme catalyses Ca(2+)(in) = Ca(2+)(out). In terms of biological role, ionotropic glutamate receptor that functions as a ligand-gated cation channel, gated by L-glutamate and glutamatergic agonists such as alpha-amino-3-hydroxy-5-methyl-4-isoxazolepropionic acid (AMPA), quisqualic acid, and kainic acid. L-glutamate acts as an excitatory neurotransmitter at many synapses in the central nervous system and plays an important role in fast excitatory synaptic transmission by inducing long-term potentiation. Binding of the excitatory neurotransmitter L-glutamate induces a conformation change, leading to the opening of the cation channel, and thereby converts the chemical signal to an electrical impulse upon entry of calcium. The receptor then desensitizes rapidly and enters a transient inactive state, characterized by the presence of bound agonist. In the presence of CACNG8, shows resensitization which is characterized by a delayed accumulation of current flux upon continued application of glutamate. The polypeptide is Glutamate receptor 3 (Rattus norvegicus (Rat)).